Consider the following 589-residue polypeptide: MLHLHHSCLCFRSWLPAMLAVLLSLAPSASSDISASRPNILLLMADDLGIGDIGCYGNNTMRTPNIDRLAEDGVKLTQHISAASLCTPSRAAFLTGRYPVRSGMVSSIGYRVLQWTGASGGLPTNETTFAKILKEKGYATGLIGKWHLGLNCESASDHCHHPLHHGFDHFYGMPFSLMGDCARWELSEKRVNLEQKLNFLFQVLALVALTLVAGKLTHLIPVSWMPVIWSALSAVLLLASSYFVGALIVHADCFLMRNHTITEQPMCFQRTTPLILQEVASFLKRNKHGPFLLFVSFLHVHIPLITMENFLGKSLHGLYGDNVEEMDWMVGRILDTLDVEGLSNSTLIYFTSDHGGSLENQLGNTQYGGWNGIYKGGKGMGGWEGGIRVPGIFRWPGVLPAGRVIGEPTSLMDVFPTVVRLAGGEVPQDRVIDGQDLLPLLLGTAQHSDHEFLMHYCERFLHAARWHQRDRGTMWKVHFVTPVFQPEGAGACYGRKVCPCFGEKVVHHDPPLLFDLSRDPSETHILTPASEPVFYQVMERVQQAVWEHQRTLSPVPLQLDRLGNIWRPWLQPCCGPFPLCWCLREDDPQ.

A signal peptide spans 1 to 31 (MLHLHHSCLCFRSWLPAMLAVLLSLAPSASS). Ca(2+) is bound by residues Asp-46 and Asp-47. An N-linked (GlcNAc...) asparagine glycan is attached at Asn-58. Ca(2+) is bound at residue Cys-86. Catalysis depends on Cys-86, which acts as the Nucleophile. At Cys-86 the chain carries 3-oxoalanine (Cys). N-linked (GlcNAc...) asparagine glycosylation occurs at Asn-125. Lys-145 contributes to the substrate binding site. Residue His-147 is part of the active site. Asn-258 carries an N-linked (GlcNAc...) asparagine glycan. His-301 serves as a coordination point for substrate. A glycan (N-linked (GlcNAc...) asparagine) is linked at Asn-344. Ca(2+)-binding residues include Asp-353 and His-354. Residue Lys-378 coordinates substrate.

Belongs to the sulfatase family. The cofactor is Ca(2+). N-glycosylated. In terms of processing, the conversion to 3-oxoalanine (also known as C-formylglycine, FGly), of a serine or cysteine residue in prokaryotes and of a cysteine residue in eukaryotes, is critical for catalytic activity. In terms of tissue distribution, expressed in the pancreas, liver and kidney.

It localises to the golgi apparatus. Its subcellular location is the golgi stack. It carries out the reaction an aryl sulfate + H2O = a phenol + sulfate + H(+). With respect to regulation, inhibited by millimolar concentrations of warfarin. In terms of biological role, exhibits arylsulfatase activity towards the artificial substrate 4-methylumbelliferyl sulfate. May be essential for the correct composition of cartilage and bone matrix during development. Has no activity toward steroid sulfates. The chain is Arylsulfatase L from Homo sapiens (Human).